The chain runs to 482 residues: Thymidine phosphorylase (482 aa).

Positions 1–10 (MAALMTPGTG) are excised as a propeptide. Residues 1–36 (MAALMTPGTGAPPAPGDFSGEGSQGLPDPSPEPKQL) are disordered. T6 is modified (phosphothreonine). Substrate-binding residues include H116, R202, S217, and K221. R-V-A-A-A-L-X(5,6)-L-G-R repeat units follow at residues 265–279 (RVAA…PLGR) and 329–342 (RVAA…ALGR). R-A-L-X-X-A-L-V-L repeat units lie at residues 393 to 401 (RALPLALVL) and 453 to 461 (RALQEALVL).

Belongs to the thymidine/pyrimidine-nucleoside phosphorylase family. As to quaternary structure, homodimer.

It catalyses the reaction thymidine + phosphate = 2-deoxy-alpha-D-ribose 1-phosphate + thymine. It functions in the pathway pyrimidine metabolism; dTMP biosynthesis via salvage pathway; dTMP from thymine: step 1/2. May have a role in maintaining the integrity of the blood vessels. Has growth promoting activity on endothelial cells, angiogenic activity in vivo and chemotactic activity on endothelial cells in vitro. Its function is as follows. Catalyzes the reversible phosphorolysis of thymidine. The produced molecules are then utilized as carbon and energy sources or in the rescue of pyrimidine bases for nucleotide synthesis. The polypeptide is Thymidine phosphorylase (Homo sapiens (Human)).